We begin with the raw amino-acid sequence, 466 residues long: Uronate isomerase (466 aa).

Belongs to the metallo-dependent hydrolases superfamily. Uronate isomerase family.

The catalysed reaction is D-glucuronate = D-fructuronate. It carries out the reaction aldehydo-D-galacturonate = keto-D-tagaturonate. It participates in carbohydrate metabolism; pentose and glucuronate interconversion. The protein is Uronate isomerase of Streptococcus pneumoniae (strain 70585).